We begin with the raw amino-acid sequence, 70 residues long: ATP synthase subunit c (70 aa).

The next 2 helical transmembrane spans lie at 4–24 (IAAG…NGLV) and 47–67 (FIGV…ALMV).

It belongs to the ATPase C chain family. In terms of assembly, F-type ATPases have 2 components, F(1) - the catalytic core - and F(0) - the membrane proton channel. F(1) has five subunits: alpha(3), beta(3), gamma(1), delta(1), epsilon(1). F(0) has three main subunits: a(1), b(2) and c(10-14). The alpha and beta chains form an alternating ring which encloses part of the gamma chain. F(1) is attached to F(0) by a central stalk formed by the gamma and epsilon chains, while a peripheral stalk is formed by the delta and b chains.

The protein localises to the cell membrane. F(1)F(0) ATP synthase produces ATP from ADP in the presence of a proton or sodium gradient. F-type ATPases consist of two structural domains, F(1) containing the extramembraneous catalytic core and F(0) containing the membrane proton channel, linked together by a central stalk and a peripheral stalk. During catalysis, ATP synthesis in the catalytic domain of F(1) is coupled via a rotary mechanism of the central stalk subunits to proton translocation. Functionally, key component of the F(0) channel; it plays a direct role in translocation across the membrane. A homomeric c-ring of between 10-14 subunits forms the central stalk rotor element with the F(1) delta and epsilon subunits. The protein is ATP synthase subunit c of Lactiplantibacillus plantarum (strain ATCC BAA-793 / NCIMB 8826 / WCFS1) (Lactobacillus plantarum).